A 98-amino-acid polypeptide reads, in one-letter code: NADH-ubiquinone oxidoreductase chain 4L (98 aa).

3 consecutive transmembrane segments (helical) span residues Met1 to Met21, Ser29 to Leu49, and Ile61 to Val81.

The protein belongs to the complex I subunit 4L family. As to quaternary structure, core subunit of respiratory chain NADH dehydrogenase (Complex I) which is composed of 45 different subunits.

Its subcellular location is the mitochondrion inner membrane. The catalysed reaction is a ubiquinone + NADH + 5 H(+)(in) = a ubiquinol + NAD(+) + 4 H(+)(out). Its function is as follows. Core subunit of the mitochondrial membrane respiratory chain NADH dehydrogenase (Complex I) which catalyzes electron transfer from NADH through the respiratory chain, using ubiquinone as an electron acceptor. Part of the enzyme membrane arm which is embedded in the lipid bilayer and involved in proton translocation. The chain is NADH-ubiquinone oxidoreductase chain 4L (MT-ND4L) from Zalophus californianus (California sealion).